We begin with the raw amino-acid sequence, 337 residues long: Hsp90 co-chaperone Cdc37-like 1 (337 aa).

Positions 1–11 (MEQPWPPPGPW) are enriched in pro residues. Residues 1 to 42 (MEQPWPPPGPWSLPRAEGEAEEENDLDVFPSSPRCPQLPGGS) are disordered. Residues 2-171 (EQPWPPPGPW…YEQKIRHFGM (170 aa)) are self-association. S32 and S88 each carry phosphoserine. Residues 85 to 122 (NSESLDQEHAKAQIAVSELRQREEEWRQKEEALVQREK) are a coiled coil. The interval 147-277 (KDTEDEDKSE…SRVRLYSQSQ (131 aa)) is self-association and interaction with Hsp90. An interaction with Hsp70 region spans residues 267–337 (KSRVRLYSQS…DDEPKMMDTV (71 aa)). The interval 278–337 (SFQPMTVQNHVPHSGVGSIGLLESLPQNPDYLQYSINTALCSLNSVVHKEDDEPKMMDTV) is required for interaction with STIP1.

It belongs to the CDC37 family. As to quaternary structure, self-associates. Forms complexes with Hsp70 and Hsp90. Interacts with CDC37, FKBP4, PPID and STIP1.

The protein localises to the cytoplasm. Co-chaperone that binds to numerous proteins and promotes their interaction with Hsp70 and Hsp90. This Pongo abelii (Sumatran orangutan) protein is Hsp90 co-chaperone Cdc37-like 1 (CDC37L1).